The chain runs to 152 residues: Arginine repressor (152 aa).

The protein belongs to the ArgR family.

It is found in the cytoplasm. The protein operates within amino-acid biosynthesis; L-arginine biosynthesis [regulation]. Its function is as follows. Regulates arginine biosynthesis genes. The polypeptide is Arginine repressor (Lactiplantibacillus plantarum (strain ATCC BAA-793 / NCIMB 8826 / WCFS1) (Lactobacillus plantarum)).